The primary structure comprises 813 residues: Ribonuclease R (813 aa).

The region spanning 260-587 (RVDLRDLPLV…LHRAIKYLLA (328 aa)) is the RNB domain. An N6-acetyllysine modification is found at Lys544. Positions 644–725 (GNVFKGVISS…DERKIDFSLI (82 aa)) constitute an S1 motif domain. The segment at 733 to 813 (NVGKTAREKA…KRAAKKKVAE (81 aa)) is disordered. Basic and acidic residues-rich tracts occupy residues 737-749 (TAREKAKKGDAGK) and 761-774 (VNFEPDSAFRGEKK). Residues 775 to 791 (TKPKAAKKDARKAKKPS) are compositionally biased toward basic residues. The segment covering 792 to 801 (AKTQKIAAAT) has biased composition (low complexity). Basic residues predominate over residues 802–813 (KAKRAAKKKVAE).

This sequence belongs to the RNR ribonuclease family. RNase R subfamily. In terms of assembly, monomer.

It is found in the cytoplasm. It carries out the reaction Exonucleolytic cleavage in the 3'- to 5'-direction to yield nucleoside 5'-phosphates.. In terms of biological role, 3'-5' exoribonuclease that releases 5'-nucleoside monophosphates and is involved in maturation of structured RNAs. Required for the expression of virulence genes on the large plasmid of S.flexneri at the post-transcriptional level. In Shigella flexneri, this protein is Ribonuclease R.